We begin with the raw amino-acid sequence, 663 residues long: Transketolase 2 (663 aa).

His-25 is a binding site for substrate. Residues His-65 and 113–115 (GPL) each bind thiamine diphosphate. Residue Asp-154 coordinates Mg(2+). Positions 155 and 184 each coordinate thiamine diphosphate. Asn-184 and Ile-186 together coordinate Mg(2+). Positions 259, 356, and 383 each coordinate substrate. Position 259 (His-259) interacts with thiamine diphosphate. The Proton donor role is filled by Glu-410. Phe-436 is a thiamine diphosphate binding site. 3 residues coordinate substrate: His-460, Asp-468, and Arg-519.

This sequence belongs to the transketolase family. In terms of assembly, homodimer. It depends on Mg(2+) as a cofactor. Ca(2+) is required as a cofactor. Mn(2+) serves as cofactor. The cofactor is Co(2+). Requires thiamine diphosphate as cofactor.

It carries out the reaction D-sedoheptulose 7-phosphate + D-glyceraldehyde 3-phosphate = aldehydo-D-ribose 5-phosphate + D-xylulose 5-phosphate. In terms of biological role, catalyzes the transfer of a two-carbon ketol group from a ketose donor to an aldose acceptor, via a covalent intermediate with the cofactor thiamine pyrophosphate. This Vibrio parahaemolyticus serotype O3:K6 (strain RIMD 2210633) protein is Transketolase 2 (tkt2).